The chain runs to 362 residues: Chorismate synthase (362 aa).

An NADP(+)-binding site is contributed by arginine 46. FMN-binding positions include 122-124 (RSS), 238-239 (NA), glycine 278, 293-297 (KPTPS), and arginine 319.

It belongs to the chorismate synthase family. As to quaternary structure, homotetramer. FMNH2 serves as cofactor.

The enzyme catalyses 5-O-(1-carboxyvinyl)-3-phosphoshikimate = chorismate + phosphate. The protein operates within metabolic intermediate biosynthesis; chorismate biosynthesis; chorismate from D-erythrose 4-phosphate and phosphoenolpyruvate: step 7/7. Its function is as follows. Catalyzes the anti-1,4-elimination of the C-3 phosphate and the C-6 proR hydrogen from 5-enolpyruvylshikimate-3-phosphate (EPSP) to yield chorismate, which is the branch point compound that serves as the starting substrate for the three terminal pathways of aromatic amino acid biosynthesis. This reaction introduces a second double bond into the aromatic ring system. The polypeptide is Chorismate synthase (Campylobacter jejuni (strain RM1221)).